Reading from the N-terminus, the 166-residue chain is CDP-archaeol synthase (166 aa).

The next 4 helical transmembrane spans lie at 42–62, 73–93, 104–124, and 128–148; these read FFGGVVSGVLVGLIEIWAATA, FLSVTLLATGALLGDLAKSFL, SWFLADQYDLVVGSFLLILIF, and WLFGTITLPIAVWIVVMTPLL.

It belongs to the CDP-archaeol synthase family. It depends on Mg(2+) as a cofactor.

It localises to the cell membrane. It carries out the reaction 2,3-bis-O-(geranylgeranyl)-sn-glycerol 1-phosphate + CTP + H(+) = CDP-2,3-bis-O-(geranylgeranyl)-sn-glycerol + diphosphate. Its pathway is membrane lipid metabolism; glycerophospholipid metabolism. Functionally, catalyzes the formation of CDP-2,3-bis-(O-geranylgeranyl)-sn-glycerol (CDP-archaeol) from 2,3-bis-(O-geranylgeranyl)-sn-glycerol 1-phosphate (DGGGP) and CTP. This reaction is the third ether-bond-formation step in the biosynthesis of archaeal membrane lipids. This Methanoculleus marisnigri (strain ATCC 35101 / DSM 1498 / JR1) protein is CDP-archaeol synthase.